A 290-amino-acid polypeptide reads, in one-letter code: MLARFPLYLRLVRMDKPIGSLLLLWPTLNALWIASDGHPRWPLLAIFVLGTLLMRSAGCAMNDYADRDFDRHVKRTADRPLTSGKIRAWEAVAIAVVLAFISFLLIQPLNTLTKELSVVALFVAGSYPFMKRFFAIPQAYLGIAFGFGIPMAFAAVQDTVPMLAWVMLIANIFWSVAYDTEYAMVDRDDDIKIGIRTSALTFGRFDVAAVMLCYAATLGIYVWIGVTLGFGLAYWAGWAAAVGCALYHYTLIKDRERMPCFAAFRHNNWLGGVLFAGIAAHYLLAGTAGN.

A run of 6 helical transmembrane segments spans residues 41 to 61 (WPLLAIFVLGTLLMRSAGCAM), 89 to 109 (WEAVAIAVVLAFISFLLIQPL), 133 to 153 (FFAIPQAYLGIAFGFGIPMAF), 158 to 178 (DTVPMLAWVMLIANIFWSVAY), 202 to 224 (FGRFDVAAVMLCYAATLGIYVWI), and 269 to 289 (WLGGVLFAGIAAHYLLAGTAG).

Belongs to the UbiA prenyltransferase family. It depends on Mg(2+) as a cofactor.

It localises to the cell inner membrane. It carries out the reaction all-trans-octaprenyl diphosphate + 4-hydroxybenzoate = 4-hydroxy-3-(all-trans-octaprenyl)benzoate + diphosphate. It participates in cofactor biosynthesis; ubiquinone biosynthesis. Functionally, catalyzes the prenylation of para-hydroxybenzoate (PHB) with an all-trans polyprenyl group. Mediates the second step in the final reaction sequence of ubiquinone-8 (UQ-8) biosynthesis, which is the condensation of the polyisoprenoid side chain with PHB, generating the first membrane-bound Q intermediate 3-octaprenyl-4-hydroxybenzoate. In Burkholderia ambifaria (strain ATCC BAA-244 / DSM 16087 / CCUG 44356 / LMG 19182 / AMMD) (Burkholderia cepacia (strain AMMD)), this protein is 4-hydroxybenzoate octaprenyltransferase.